The following is a 139-amino-acid chain: Transcriptional regulator WhiB5 (139 aa).

The 4Fe-4S Wbl-type domain maps to 4-77 (PCATDPELWF…AGIKLPGGQY (74 aa)). [4Fe-4S] cluster-binding residues include Cys-5, Cys-41, Cys-45, and Cys-53.

This sequence belongs to the WhiB family. [4Fe-4S] cluster serves as cofactor. In terms of processing, the Fe-S cluster can be nitrosylated by nitric oxide (NO). Upon Fe-S cluster removal intramolecular disulfide bonds are formed.

The protein resides in the cytoplasm. In terms of biological role, a transcription factor that is probably redox-responsive. Probably plays a role in immunomodulation and reactivation after chronic infection. Its induction results in transcription of a number of genes including sigM, and the genes for 2 type VII secretion systems ESX-2 and ESX-4. Seems to negatively regulate its own expression. The apo-form has been shown to act as a protein disulfide reductase. The apo- but not holo-form probably binds DNA. This Mycobacterium tuberculosis (strain ATCC 25618 / H37Rv) protein is Transcriptional regulator WhiB5 (whiB5).